The sequence spans 510 residues: 11S globulin (510 aa).

A signal peptide spans 1 to 23; it reads MAKPILLSISLCLVALVNGCLAQ. Cystine bridges form between cysteine 35-cysteine 68 and cysteine 111-cysteine 325. The Cupin type-1 1 domain occupies 38–257; the sequence is KRLVALEPSN…AFNVDTETAR (220 aa). 2 disordered regions span residues 194–239 and 284–319; these read AGNP…VFSG and WSRE…DDNG. Over residues 284–318 the composition is skewed to basic and acidic residues; it reads WSREEQEREERKERERERESESERRQSRRGGRDDN. The short motif at 318–323 is the NGXEET; peptidase recognition motif element; sequence NGLEET. Residues 331–480 enclose the Cupin type-1 2 domain; sequence ENIGDPSRAD…ALQIPREDAR (150 aa). Positions 487–510 are disordered; it reads QESTLVRSRPSSSRSSRSERRAEV.

The protein belongs to the 11S seed storage protein (globulins) family. As to quaternary structure, homohexamer. Can assemble in other multimeric configurations. Proteolytically processed from a single precursor to produce an acidic and a basic chain that are linked by a disulfide bond. Expressed in endosperm of the seed.

Its function is as follows. Seed storage protein. This chain is 11S globulin, found in Juglans nigra (Black walnut).